The chain runs to 341 residues: Ketol-acid reductoisomerase (NADP(+)) (341 aa).

A KARI N-terminal Rossmann domain is found at 2-182 (AKIYYNDDAD…GGTRAGVIET (181 aa)). NADP(+)-binding positions include 25–28 (YGSQ), Ser-51, Ser-53, and 83–86 (DQVQ). The active site involves His-108. An NADP(+)-binding site is contributed by Gly-134. The 146-residue stretch at 183–328 (TFTEETESDL…RKLRSLFAWE (146 aa)) folds into the KARI C-terminal knotted domain. Mg(2+)-binding residues include Asp-191, Glu-195, Glu-227, and Glu-231. Position 252 (Ser-252) interacts with substrate.

This sequence belongs to the ketol-acid reductoisomerase family. Mg(2+) is required as a cofactor.

It carries out the reaction (2R)-2,3-dihydroxy-3-methylbutanoate + NADP(+) = (2S)-2-acetolactate + NADPH + H(+). The catalysed reaction is (2R,3R)-2,3-dihydroxy-3-methylpentanoate + NADP(+) = (S)-2-ethyl-2-hydroxy-3-oxobutanoate + NADPH + H(+). It functions in the pathway amino-acid biosynthesis; L-isoleucine biosynthesis; L-isoleucine from 2-oxobutanoate: step 2/4. Its pathway is amino-acid biosynthesis; L-valine biosynthesis; L-valine from pyruvate: step 2/4. Its function is as follows. Involved in the biosynthesis of branched-chain amino acids (BCAA). Catalyzes an alkyl-migration followed by a ketol-acid reduction of (S)-2-acetolactate (S2AL) to yield (R)-2,3-dihydroxy-isovalerate. In the isomerase reaction, S2AL is rearranged via a Mg-dependent methyl migration to produce 3-hydroxy-3-methyl-2-ketobutyrate (HMKB). In the reductase reaction, this 2-ketoacid undergoes a metal-dependent reduction by NADPH to yield (R)-2,3-dihydroxy-isovalerate. The polypeptide is Ketol-acid reductoisomerase (NADP(+)) (Kocuria rhizophila (strain ATCC 9341 / DSM 348 / NBRC 103217 / DC2201)).